The sequence spans 512 residues: MIKRLFCSINKNKIINEPPKLSIIKDTIYNLSSGVGKSGVAIIRVSGPQAETVIRKLIKKSDVDKNEEIKSRYATLSTFYNPKTNEQLDKGMFIWFPSPNSFTGEDVVEFHIHGGRAVIYETMEAIGLIEGTRPSEQGEFTKRAFENGKMDLTQVEGLSDLLDASTSFQKKIALKQMQGSISEFYLSLRKDLIRASAYMEAFIDFGDDAELDPEIVDQSRNRIISIRDKIQQHLNDGKRGERLRDGANIAIVGPPNAGKSSLINLLTNRKASIVSPIAGTTRDIVEVILDIDGYPVIIGDTAGLRNSTNDQIEIEGIEMAKDRFNNSDIKLFLFDSFNLFSQLNQNQNLNSSFNFNEEIKNLFNFIDNETIIIFNKSDLLKQFDNLKEWENLKLNLLDNIKKSNNLNSIQSIEISCNNNENIKDLLNLLKLNLKNLFEIQDKESPLLTRLRYKQHLSDCVESLDRYLYYCEHDVVLASEELRSAILSISEITHSVNIDDLLDIIFKDFCIGK.

Residues 246–434 (GANIAIVGPP…LLNLLKLNLK (189 aa)) enclose the TrmE-type G domain. Residues 253-260 (GPPNAGKS), 300-304 (DTAGL), and 375-378 (NKSD) each bind GTP.

This sequence belongs to the TRAFAC class TrmE-Era-EngA-EngB-Septin-like GTPase superfamily. TrmE GTPase family.

Its subcellular location is the mitochondrion. Functionally, GTPase involved in the 5-carboxymethylaminomethyl modification (mnm(5)s(2)U34) of the wobble uridine base in mitochondrial tRNAs. The sequence is that of tRNA modification GTPase gtpbp3, mitochondrial (gtpbp3) from Dictyostelium discoideum (Social amoeba).